The sequence spans 386 residues: IgA receptor (386 aa).

The N-terminal stretch at 1-41 (MARKDTNKQYSLRKLKTGTASVAVAVAVLGAGFANQTEVKA) is a signal peptide. An igA-binding region spans residues 42 to 152 (AEIKKPQADS…QKKHQQEQQQ (111 aa)). Basic and acidic residues-rich tracts occupy residues 79-88 (YADDKEKDPQ), 97-128 (QDLR…EQLE), 134-166 (EADK…DKQI), 174-201 (LSRD…EKQI), 209-221 (LSRD…EAKK), 233-243 (EHQKLKEDKQI), and 251-267 (LSRD…KVEA). Disordered regions lie at residues 79–221 (YADD…EAKK) and 233–268 (EHQK…VEAD). C repeat units follow at residues 158-192 (QKLA…EAEH), 193-227 (QKLK…EADL), and 235-269 (QKLK…EADL). D repeat units lie at residues 302–307 (ARLEAE), 308–313 (AKALKE), 316–321 (AKQAEE), and 323–328 (AKLKGN). The segment at 323 to 360 (AKLKGNQTPNAKVAPQANRSRSAMTQQKRTLPSTGETA) is disordered. Polar residues predominate over residues 339–359 (ANRSRSAMTQQKRTLPSTGET). The LPXTG sorting signal motif lies at 353–357 (LPSTG). Threonine 356 is modified (pentaglycyl murein peptidoglycan amidated threonine). The propeptide at 357–386 (GETANPFFTAAAATVMVSAGMLALKRKEEN) is removed by sortase.

This sequence belongs to the M protein family.

The protein resides in the secreted. Its subcellular location is the cell wall. Its function is as follows. Binds IgA of both subclasses, and also binds polyclonal IgG weakly. This is IgA receptor (arp4) from Streptococcus pyogenes.